The following is a 391-amino-acid chain: S-adenosylmethionine synthase (391 aa).

An ATP-binding site is contributed by H14. D16 contributes to the Mg(2+) binding site. Residue E42 participates in K(+) binding. L-methionine is bound by residues E55 and Q98. The tract at residues 98–108 is flexible loop; sequence QSPDIAMGVDE. ATP is bound by residues 172-174, 238-239, D247, 253-254, A270, and K274; these read DGK, RF, and RK. Residue D247 coordinates L-methionine. K278 serves as a coordination point for L-methionine.

The protein belongs to the AdoMet synthase family. As to quaternary structure, homotetramer; dimer of dimers. Requires Mg(2+) as cofactor. K(+) serves as cofactor.

It localises to the cytoplasm. The enzyme catalyses L-methionine + ATP + H2O = S-adenosyl-L-methionine + phosphate + diphosphate. It participates in amino-acid biosynthesis; S-adenosyl-L-methionine biosynthesis; S-adenosyl-L-methionine from L-methionine: step 1/1. Its function is as follows. Catalyzes the formation of S-adenosylmethionine (AdoMet) from methionine and ATP. The overall synthetic reaction is composed of two sequential steps, AdoMet formation and the subsequent tripolyphosphate hydrolysis which occurs prior to release of AdoMet from the enzyme. This chain is S-adenosylmethionine synthase, found in Clostridium tetani (strain Massachusetts / E88).